Here is a 1026-residue protein sequence, read N- to C-terminus: Lon protease homolog, mitochondrial (1026 aa).

The transit peptide at 1–29 (MLGTRVTRAVYTRAPLKLQLRALGLHRRY) directs the protein to the mitochondrion. Disordered regions lie at residues 29–55 (YVHNGSKNDEGSSTSTTTNKEENDKKL) and 185–206 (ASEETKDEETVDKTESATDKVS). Residues 62 to 345 (MLALPISRRP…KSLLVLKKEL (284 aa)) enclose the Lon N-terminal domain. The span at 185–194 (ASEETKDEET) shows a compositional bias: acidic residues. The segment covering 195–206 (VDKTESATDKVS) has biased composition (basic and acidic residues). Position 497-504 (497-504 (GPPGVGKT)) interacts with ATP. A disordered region spans residues 711 to 785 (TEPLVSTSEE…EEEEDTSMIV (75 aa)). Residues 714 to 737 (LVSTSEEPQLSQTNQNISSSSAED) show a composition bias toward polar residues. Positions 815 to 1001 (TTPPGVIMGL…DDIYKRLFSG (187 aa)) constitute a Lon proteolytic domain. Catalysis depends on residues serine 907 and lysine 950.

This sequence belongs to the peptidase S16 family. In terms of assembly, homohexamer or homoheptamer. Organized in a ring with a central cavity.

It is found in the mitochondrion matrix. It catalyses the reaction Hydrolysis of proteins in presence of ATP.. ATP-dependent serine protease that mediates the selective degradation of misfolded, unassembled or oxidatively damaged polypeptides as well as certain short-lived regulatory proteins in the mitochondrial matrix. May also have a chaperone function in the assembly of inner membrane protein complexes. Participates in the regulation of mitochondrial gene expression and in the maintenance of the integrity of the mitochondrial genome. Binds to mitochondrial DNA in a site-specific manner. This is Lon protease homolog, mitochondrial from Candida glabrata (strain ATCC 2001 / BCRC 20586 / JCM 3761 / NBRC 0622 / NRRL Y-65 / CBS 138) (Yeast).